A 419-amino-acid polypeptide reads, in one-letter code: Tyrosine--tRNA ligase (419 aa).

Y34 contacts L-tyrosine. Positions 39–48 (PSGDSMHIGH) match the 'HIGH' region motif. L-tyrosine contacts are provided by Y168 and Q172. The short motif at 230–234 (KFGKS) is the 'KMSKS' region element. K233 provides a ligand contact to ATP. The 67-residue stretch at 352 to 418 (VNLVDWLVSL…GKKKYFLVSY (67 aa)) folds into the S4 RNA-binding domain.

Belongs to the class-I aminoacyl-tRNA synthetase family. TyrS type 1 subfamily. As to quaternary structure, homodimer.

It is found in the cytoplasm. The catalysed reaction is tRNA(Tyr) + L-tyrosine + ATP = L-tyrosyl-tRNA(Tyr) + AMP + diphosphate + H(+). Its function is as follows. Catalyzes the attachment of tyrosine to tRNA(Tyr) in a two-step reaction: tyrosine is first activated by ATP to form Tyr-AMP and then transferred to the acceptor end of tRNA(Tyr). This Listeria welshimeri serovar 6b (strain ATCC 35897 / DSM 20650 / CCUG 15529 / CIP 8149 / NCTC 11857 / SLCC 5334 / V8) protein is Tyrosine--tRNA ligase.